The primary structure comprises 143 residues: Small ribosomal subunit protein uS12 (143 aa).

Belongs to the universal ribosomal protein uS12 family. As to quaternary structure, component of the 40S small ribosomal subunit.

It is found in the cytoplasm. The protein resides in the cytosol. The protein localises to the rough endoplasmic reticulum. The polypeptide is Small ribosomal subunit protein uS12 (rps23) (Gillichthys mirabilis (Long-jawed mudsucker)).